A 287-amino-acid chain; its full sequence is L-cysteine S-thiosulfotransferase subunit SoxA (287 aa).

The signal sequence occupies residues 1–26 (MKTMTGRLVAAALVCGGAFSGAAVSA). The region spanning 74-168 (DDFENSGMVF…AMVALIASVS (95 aa)) is the Cytochrome c domain. Heme c-binding residues include Cys102, Cys105, His106, Cys140, Cys203, Cys206, and His207. Residue Arg244 participates in substrate binding. Cys248 serves as a coordination point for heme c. The active-site Cysteine persulfide intermediate is Cys248.

Belongs to the SoxA family. As to quaternary structure, heterodimer of SoxA and SoxX. The cofactor is heme c. Cysteine persulfide at Cys-248.

It is found in the periplasm. The catalysed reaction is L-cysteinyl-[SoxY protein] + thiosulfate + 2 Fe(III)-[cytochrome c] = S-sulfosulfanyl-L-cysteinyl-[SoxY protein] + 2 Fe(II)-[cytochrome c] + 2 H(+). It catalyses the reaction S-sulfanyl-L-cysteinyl-[SoxY protein] + thiosulfate + 2 Fe(III)-[cytochrome c] = S-(2-sulfodisulfanyl)-L-cysteinyl-[SoxY protein] + 2 Fe(II)-[cytochrome c] + 2 H(+). Its function is as follows. C-type diheme cytochrome, which is part of the SoxAX cytochrome complex involved in sulfur oxidation. The SoxAX complex catalyzes the formation of a heterodisulfide bond between the conserved cysteine residue on a sulfur carrier SoxYZ complex subunit SoxY and thiosulfate or other inorganic sulfur substrates. This leads to the liberation of two electrons, which may be transferred from the SoxAX complex to another cytochrome c and which then may be used for reductive CO(2) fixation. This chain is L-cysteine S-thiosulfotransferase subunit SoxA, found in Rhodovulum sulfidophilum (Rhodobacter sulfidophilus).